Consider the following 337-residue polypeptide: tRNA N6-adenosine threonylcarbamoyltransferase (337 aa).

The Fe cation site is built by His-111 and His-115. Residues 134–138 (LVSGG), Asp-167, Gly-180, and Asn-272 each bind substrate. Asp-300 is a binding site for Fe cation.

Belongs to the KAE1 / TsaD family. Requires Fe(2+) as cofactor.

The protein resides in the cytoplasm. It carries out the reaction L-threonylcarbamoyladenylate + adenosine(37) in tRNA = N(6)-L-threonylcarbamoyladenosine(37) in tRNA + AMP + H(+). Required for the formation of a threonylcarbamoyl group on adenosine at position 37 (t(6)A37) in tRNAs that read codons beginning with adenine. Is involved in the transfer of the threonylcarbamoyl moiety of threonylcarbamoyl-AMP (TC-AMP) to the N6 group of A37, together with TsaE and TsaB. TsaD likely plays a direct catalytic role in this reaction. The protein is tRNA N6-adenosine threonylcarbamoyltransferase of Erwinia tasmaniensis (strain DSM 17950 / CFBP 7177 / CIP 109463 / NCPPB 4357 / Et1/99).